Here is a 74-residue protein sequence, read N- to C-terminus: Kappa-scoloptoxin(07)-Ssm2c (74 aa).

Residues methionine 1–glycine 19 form the signal peptide. A propeptide spanning residues alanine 20–asparagine 41 is cleaved from the precursor.

It belongs to the scoloptoxin-07 family. In terms of processing, contains 3 disulfide bonds. Expressed by the venom gland.

The protein resides in the secreted. Its function is as follows. Inhibits voltage-gated potassium channels. The sequence is that of Kappa-scoloptoxin(07)-Ssm2c from Scolopendra mutilans (Chinese red-headed centipede).